The sequence spans 301 residues: Rhodopsin (301 aa).

Over 1-18 (LHMIHLHWYQYPPMNPMM) the chain is Extracellular. The helical transmembrane segment at 19-43 (YPLLLIFMFITGIPCLAGNFVTIWV) threads the bilayer. The Cytoplasmic segment spans residues 44–55 (FMTTKSLRSPAN). Residues 56-78 (LLVVNLAMSDFLMMFTMFPPMMI) traverse the membrane as a helical segment. Over 79 to 92 (TCYYHTWTLGPTFC) the chain is Extracellular. Residues C92 and C169 are joined by a disulfide bond. A helical membrane pass occupies residues 93–115 (QVYAFLGNLFGCTSIWTMVFITF). Positions 116–118 (DRY) match the 'Ionic lock' involved in activated form stabilization motif. The Cytoplasmic portion of the chain corresponds to 116 to 134 (DRYNVIVKGVAGEPLSNKK). Residues 135-155 (AALWILSAWVLSFSWCSAPFF) form a helical membrane-spanning segment. At 156-182 (GWNRYVPEGNLTGCGTDYLSEDALSRS) the chain is on the extracellular side. An N-linked (GlcNAc...) asparagine glycan is attached at N165. Residues 183 to 204 (YLYVYSVWVYFLPLLITIYCYV) traverse the membrane as a helical segment. Residues 205–245 (FIIKAVAAHEKGMRDQAKKMGIKSLRNEEAQKTSAECRLAK) lie on the Cytoplasmic side of the membrane. The helical transmembrane segment at 246–267 (IAMTTVALWFIAWTPYLLINWV) threads the bilayer. The Extracellular segment spans residues 268–278 (GMFARSYLSPV). The helical transmembrane segment at 279–300 (YTIWGYVFAKANAVYNPIVYAI) threads the bilayer. Position 288 is an N6-(retinylidene)lysine (K288).

It belongs to the G-protein coupled receptor 1 family. Opsin subfamily. Homodimer. Interacts with GNAQ. Contains one covalently linked retinal chromophore.

It is found in the cell projection. The protein resides in the rhabdomere membrane. Photoreceptor required for image-forming vision at low light intensity. Can use both retinal and 3-dehydroretinal as visual pigment. Light-induced isomerization of 11-cis to all-trans retinal triggers a conformational change that activates signaling via G-proteins. Signaling via GNAQ probably mediates the activation of phospholipase C. This is Rhodopsin (RHO) from Cambarellus shufeldtii (Cajun dwarf crayfish).